Consider the following 362-residue polypeptide: Outer mitochondrial transmembrane helix translocase (362 aa).

Topologically, residues Met-1–Glu-19 are mitochondrial intermembrane. Residues Val-20–Val-42 traverse the membrane as a helical segment. Residues Asp-43–Asp-362 are Cytoplasmic-facing. An ATP-binding site is contributed by Gly-137–Thr-144.

It belongs to the AAA ATPase family. MSP1 subfamily.

Its subcellular location is the mitochondrion outer membrane. The protein resides in the peroxisome membrane. It is found in the postsynaptic cell membrane. The catalysed reaction is [protein]-with a C-terminal TM segment(out) + ATP + H2O = [protein]-with a C-terminal TM segment(in) + ADP + phosphate + H(+). Outer mitochondrial translocase required to remove mislocalized tail-anchored transmembrane proteins on mitochondria. Specifically recognizes and binds tail-anchored transmembrane proteins: acts as a dislocase that mediates the ATP-dependent extraction of mistargeted tail-anchored transmembrane proteins from the mitochondrion outer membrane. Also plays a critical role in regulating the surface expression of AMPA receptors (AMPAR), thereby regulating synaptic plasticity and learning and memory. The polypeptide is Outer mitochondrial transmembrane helix translocase (Danio rerio (Zebrafish)).